We begin with the raw amino-acid sequence, 310 residues long: tRNA pseudouridine synthase B (310 aa).

Asp-38 acts as the Nucleophile in catalysis.

Belongs to the pseudouridine synthase TruB family. Type 1 subfamily.

It carries out the reaction uridine(55) in tRNA = pseudouridine(55) in tRNA. In terms of biological role, responsible for synthesis of pseudouridine from uracil-55 in the psi GC loop of transfer RNAs. This Geotalea uraniireducens (strain Rf4) (Geobacter uraniireducens) protein is tRNA pseudouridine synthase B.